A 449-amino-acid chain; its full sequence is MQDVIKKIEDYSSRNGIMLPNPVTEYVAGIAEEEKLKDPELHDLVRLFSRICERNRGLEGEELLKAVEDEYLRILKVRELVKRKRAKFPPRLIEEIAEAIKRHGLSDDELDELVRGVRRAYERAMVEAGEAVGTVAAQSVGEPGTQMTMRTFHYAGVAELNVTLGLPRLIEIVDARKKISTPTMSIYFEGDRKYDEEFVRKKANKICKSTLNDVLKNFSIQYADMSVEAELDEEKIREKHLEYDDIIAKVEKTFKKVEIDNNILRFEPPKPTIRELRLLADKVRKLQISGVKNIGKVVIRKEDDEWVIHTEGSNLGDRFKEEGVDKVRTTTNDIHEIETVLGIEAARNAIIHEAKRTMEEQGLTVDIRHIMLVADMMTADGSVKSIGRHGISGEKASVLARASFEETGKHLLRASIRGEVDHLTGIIENIIIGQPIPLGTGSVSVIMKK.

The interval 1–68 (MQDVIKKIED…EGEELLKAVE (68 aa)) is unknown. The DNA-directed RNA polymerase subunit Rpo1C stretch occupies residues 69 to 449 (DEYLRILKVR…TGSVSVIMKK (381 aa)).

Belongs to the RNA polymerase beta' chain family. In terms of assembly, part of the RNA polymerase complex.

It is found in the cytoplasm. The catalysed reaction is RNA(n) + a ribonucleoside 5'-triphosphate = RNA(n+1) + diphosphate. Functionally, DNA-dependent RNA polymerase (RNAP) catalyzes the transcription of DNA into RNA using the four ribonucleoside triphosphates as substrates. Forms part of the jaw domain. This chain is DNA-directed RNA polymerase subunit Rpo1C, found in Methanothermobacter thermautotrophicus (strain Winter) (Methanobacterium thermoautotrophicum).